The primary structure comprises 147 residues: Large ribosomal subunit protein uL16 (147 aa).

The protein belongs to the universal ribosomal protein uL16 family. Part of the 50S ribosomal subunit.

Binds 23S rRNA and is also seen to make contacts with the A and possibly P site tRNAs. The chain is Large ribosomal subunit protein uL16 from Finegoldia magna (strain ATCC 29328 / DSM 20472 / WAL 2508) (Peptostreptococcus magnus).